The sequence spans 784 residues: Toll-like receptor 2 (784 aa).

The first 20 residues, 1-20 (MPHTLWMVWVLGVIISLSKE), serve as a signal peptide directing secretion. Topologically, residues 21–587 (ESSNQASLSC…VRLSVSECHR (567 aa)) are extracellular. The cysteines at positions 30 and 36 are disulfide-linked. 19 LRR repeats span residues 54–77 (VKCL…RYVN), 78–101 (LQAL…SLGR), 102–125 (LEHL…PLSS), 126–150 (LKFL…HLTK), 151–175 (LRIL…GLTF), 176–199 (LEEL…SIQN), 200–223 (VSHL…LTSS), 224–250 (VECL…TNSL), 251–278 (IKKF…QISG), 279–308 (LLEL…DPGK), 309–337 (VETL…LTER), 338–361 (VKRI…HLKS), 362–388 (LEYL…AWPS), 389–414 (LQTL…TLKN), 415–437 (LTNL…WPEK), 438–457 (MKYL…CIPK), 458–478 (TLEI…NLPQ), 479–500 (LKEL…LLPM), and 501–524 (LLVL…SFHT). The N-linked (GlcNAc...) asparagine glycan is linked to Asn-114. N-linked (GlcNAc...) asparagine glycosylation is present at Asn-199. Cys-353 and Cys-382 are disulfide-bonded. Asn-414 carries N-linked (GlcNAc...) asparagine glycosylation. Cys-432 and Cys-454 are joined by a disulfide. A glycan (N-linked (GlcNAc...) asparagine) is linked at Asn-442. The 55-residue stretch at 525 to 579 (LKTLEAGGNNFICSCEFLSFTQEQQALAKVLVDWPANYLCDSPSHVRGQRVQDVR) folds into the LRRCT domain. A helical transmembrane segment spans residues 588 to 608 (AALVSGMCCALFLLILLMGVL). Over 609-784 (CHRFHGLWYM…WVNLRAAIKS (176 aa)) the chain is Cytoplasmic. The region spanning 639–782 (ICYDAFVSYS…GFWVNLRAAI (144 aa)) is the TIR domain. A Glycyl lysine isopeptide (Lys-Gly) (interchain with G-Cter in ubiquitin) cross-link involves residue Lys-754. Residues 761-778 (YLEWPMDEARQEGFWVNL) carry the ATG16L1-binding motif motif.

The protein belongs to the Toll-like receptor family. Interacts with LY96, TLR1 and TLR6 (via extracellular domain). TLR2 seems to exist in heterodimers with either TLR1 or TLR6 before stimulation by the ligand. The heterodimers form bigger oligomers in response to their corresponding ligands as well as further heterotypic associations with other receptors such as CD14 and/or CD36. Binds MYD88 (via TIR domain). Interacts with TICAM1. Interacts with CNPY3. Interacts with ATG16L1. Interacts with PPP1R11. Interacts with TICAM2. Interacts with TIRAP. In terms of processing, ubiquitinated at Lys-754 by PPP1R11, leading to its degradation. Deubiquitinated by USP2. Glycosylation of Asn-442 is critical for secretion of the N-terminal ectodomain of TLR2.

It localises to the membrane. The protein localises to the cytoplasmic vesicle. Its subcellular location is the phagosome membrane. The protein resides in the membrane raft. Its function is as follows. Cooperates with LY96 to mediate the innate immune response to bacterial lipoproteins and other microbial cell wall components. Cooperates with TLR1 or TLR6 to mediate the innate immune response to bacterial lipoproteins or lipopeptides. Acts via MYD88 and TRAF6, leading to NF-kappa-B activation, cytokine secretion and the inflammatory response. May also promote apoptosis in response to lipoproteins. Forms activation clusters composed of several receptors depending on the ligand, these clusters trigger signaling from the cell surface and subsequently are targeted to the Golgi in a lipid-raft dependent pathway. Forms the cluster TLR2:TLR6:CD14:CD36 in response to diacylated lipopeptides and TLR2:TLR1:CD14 in response to triacylated lipopeptides. In Macaca mulatta (Rhesus macaque), this protein is Toll-like receptor 2 (TLR2).